A 536-amino-acid chain; its full sequence is Putative UDP-glucuronosyltransferase ugt-47 (536 aa).

Positions 1–21 (MMLQTSTILQLLLFLVGSVSA) are cleaved as a signal peptide. Residues N52 and N308 are each glycosylated (N-linked (GlcNAc...) asparagine). The helical transmembrane segment at 497-517 (IIVPVLFVLLYCLIIPFFKLI) threads the bilayer.

Belongs to the UDP-glycosyltransferase family.

Its subcellular location is the membrane. It carries out the reaction glucuronate acceptor + UDP-alpha-D-glucuronate = acceptor beta-D-glucuronoside + UDP + H(+). This chain is Putative UDP-glucuronosyltransferase ugt-47 (ugt-47), found in Caenorhabditis briggsae.